The sequence spans 431 residues: Phosphoribosylamine--glycine ligase (431 aa).

Residues 109 to 316 (KDFLARHGIP…LVDLLEAAID (208 aa)) form the ATP-grasp domain. 135–196 (VREKGTPIVV…EEFLDGEEAS (62 aa)) serves as a coordination point for ATP. 2 residues coordinate Mg(2+): Glu286 and Asn288.

Belongs to the GARS family. Requires Mg(2+) as cofactor. Mn(2+) is required as a cofactor.

It catalyses the reaction 5-phospho-beta-D-ribosylamine + glycine + ATP = N(1)-(5-phospho-beta-D-ribosyl)glycinamide + ADP + phosphate + H(+). Its pathway is purine metabolism; IMP biosynthesis via de novo pathway; N(1)-(5-phospho-D-ribosyl)glycinamide from 5-phospho-alpha-D-ribose 1-diphosphate: step 2/2. This chain is Phosphoribosylamine--glycine ligase, found in Xanthomonas axonopodis pv. citri (strain 306).